A 200-amino-acid polypeptide reads, in one-letter code: Molybdenum cofactor guanylyltransferase (200 aa).

Residues 10 to 12, K23, N51, D69, and D99 contribute to the GTP site; that span reads LAG. Mg(2+) is bound at residue D99.

Belongs to the MobA family. Monomer. It depends on Mg(2+) as a cofactor.

Its subcellular location is the cytoplasm. The catalysed reaction is Mo-molybdopterin + GTP + H(+) = Mo-molybdopterin guanine dinucleotide + diphosphate. Functionally, transfers a GMP moiety from GTP to Mo-molybdopterin (Mo-MPT) cofactor (Moco or molybdenum cofactor) to form Mo-molybdopterin guanine dinucleotide (Mo-MGD) cofactor. The chain is Molybdenum cofactor guanylyltransferase from Shewanella pealeana (strain ATCC 700345 / ANG-SQ1).